Consider the following 125-residue polypeptide: Diol dehydratase-reactivating factor small subunit (125 aa).

A Mg(2+)-binding site is contributed by glutamate 31.

Belongs to the DdrB/PduH family. As to quaternary structure, component of the DDR complex, a heterotetramer of DdrA(2)/DdrB(2). The DDR complex interacts with the diol dehydratase complex in the presence of ADP but not ATP. Mg(2+) is required as a cofactor.

The enzyme catalyses ATP + H2O = ADP + phosphate + H(+). Small subunit of the diol dehydratase-reactivating factor (DDR), which reactivates suicidally inhibited adenosylcobalamin-dependent diol dehydratase (DD, pddA, pddB, pddC). DDR acts as a chaperone, reactivates inactivated DD holoenzyme in the presence of ATP, Mg(2+) and free adenosylcobalamin (AdoCbl), by mediating the exchange of the tightly bound damaged cofactor AdoCbl for a free intact one. Reactivation takes place in two steps: ADP-dependent cobalamin release, and ATP-dependent dissociation of the DD apoenzyme-DDR complex. DDR has weak ATPase activity which is required for DD reactivation. Activates glycerol-inactivated, O2-inactivated holoenzyme and inactivated enzyme-cyanocobalamin complex. Also reactivates glycerol-inactivated hologlycerol dehydratase, a DD isozyme. This is Diol dehydratase-reactivating factor small subunit from Klebsiella michiganensis (strain ATCC 8724 / DSM 4798 / JCM 20051 / NBRC 3318 / NRRL B-199 / KCTC 1686 / BUCSAV 143 / CCM 1901).